A 207-amino-acid polypeptide reads, in one-letter code: Proteasome subunit beta 2 (207 aa).

Positions methionine 1 to glycine 10 are cleaved as a propeptide — removed in mature form; by autocatalysis. Residue threonine 11 is the Nucleophile of the active site.

Belongs to the peptidase T1B family. As to quaternary structure, the 20S proteasome core is composed of 14 alpha and 14 beta subunits that assemble into four stacked heptameric rings, resulting in a barrel-shaped structure. The two inner rings, each composed of seven catalytic beta subunits, are sandwiched by two outer rings, each composed of seven alpha subunits. The catalytic chamber with the active sites is on the inside of the barrel. Has a gated structure, the ends of the cylinder being occluded by the N-termini of the alpha-subunits. Is capped at one or both ends by the proteasome regulatory ATPase, PAN.

It localises to the cytoplasm. It carries out the reaction Cleavage of peptide bonds with very broad specificity.. Its activity is regulated as follows. The formation of the proteasomal ATPase PAN-20S proteasome complex, via the docking of the C-termini of PAN into the intersubunit pockets in the alpha-rings, triggers opening of the gate for substrate entry. Interconversion between the open-gate and close-gate conformations leads to a dynamic regulation of the 20S proteasome proteolysis activity. Its function is as follows. Component of the proteasome core, a large protease complex with broad specificity involved in protein degradation. This Pyrococcus abyssi (strain GE5 / Orsay) protein is Proteasome subunit beta 2.